Here is a 375-residue protein sequence, read N- to C-terminus: Methylthioribose-1-phosphate isomerase (375 aa).

Residues 53–55 (RGA), R90, and Q202 each bind substrate. D243 (proton donor) is an active-site residue. Position 253 to 254 (253 to 254 (NK)) interacts with substrate.

Belongs to the eIF-2B alpha/beta/delta subunits family. MtnA subfamily.

It catalyses the reaction 5-(methylsulfanyl)-alpha-D-ribose 1-phosphate = 5-(methylsulfanyl)-D-ribulose 1-phosphate. The protein operates within amino-acid biosynthesis; L-methionine biosynthesis via salvage pathway; L-methionine from S-methyl-5-thio-alpha-D-ribose 1-phosphate: step 1/6. Its function is as follows. Catalyzes the interconversion of methylthioribose-1-phosphate (MTR-1-P) into methylthioribulose-1-phosphate (MTRu-1-P). The protein is Methylthioribose-1-phosphate isomerase of Rhodospirillum centenum (strain ATCC 51521 / SW).